Consider the following 78-residue polypeptide: Putative snRNP Sm-like protein (78 aa).

The Sm domain maps to 4–76 (RPLDVIHRSL…VLAISPVDVG (73 aa)).

It belongs to the snRNP Sm proteins family.

This is Putative snRNP Sm-like protein from Thermococcus onnurineus (strain NA1).